Reading from the N-terminus, the 70-residue chain is Large ribosomal subunit protein eL38 (70 aa).

This sequence belongs to the eukaryotic ribosomal protein eL38 family.

The sequence is that of Large ribosomal subunit protein eL38 (RPL38) from Artemia franciscana (Brine shrimp).